Here is a 247-residue protein sequence, read N- to C-terminus: TLC domain-containing protein 1 (247 aa).

Residues 1–35 form the signal peptide; sequence MPRLLHPALPLLLGATLTFRALRRALCRLPLPVHV. At 36 to 46 the chain is on the extracellular side; it reads RADPLRTWRWH. The TLC domain maps to 40–234; that stretch reads LRTWRWHNLL…LLRSDFCPEH (195 aa). The helical transmembrane segment at 47–67 threads the bilayer; sequence NLLVSFAHSIVSGIWALLCVW. The Cytoplasmic segment spans residues 68 to 83; that stretch reads QTPDMLVEIETAWSLS. Residues 84–104 form a helical membrane-spanning segment; the sequence is GYLLVCFSAGYFIHDTVDIVA. Residues 105–123 are Extracellular-facing; sequence SGQTRASWEYLVHHVMAMG. Residues 124–144 constitute an intramembrane region (helical); sequence AFFSGIFWSSFVGGGVLTLLV. The Extracellular segment spans residues 145–173; that stretch reads EVSNIFLTIRMMMKISNAQDHLLYRVNKY. Residues 174–194 form a helical membrane-spanning segment; it reads VNLVMYFLFRLAPQAYLTHFF. Topologically, residues 195-201 are cytoplasmic; that stretch reads LRYVNQR. A helical membrane pass occupies residues 202–222; it reads TLGTFLLGILLMLDVMIIIYF. At 223 to 247 the chain is on the extracellular side; that stretch reads SRLLRSDFCPEHVPKKQHKDKFLTE.

The protein resides in the cell membrane. Functionally, regulates the composition and fluidity of the plasma membrane. Inhibits the incorporation of membrane-fluidizing phospholipids containing omega-3 long-chain polyunsaturated fatty acids (LCPUFA) and thereby promotes membrane rigidity. Does not appear to have any effect on LCPUFA synthesis. The protein is TLC domain-containing protein 1 (TLCD1) of Homo sapiens (Human).